A 218-amino-acid chain; its full sequence is Structural protein V19 (218 aa).

It is found in the virion. In Sputnik virophage, this protein is Structural protein V19.